Reading from the N-terminus, the 251-residue chain is Imidazole glycerol phosphate synthase subunit HisF (251 aa).

Catalysis depends on residues D11 and D130.

The protein belongs to the HisA/HisF family. As to quaternary structure, heterodimer of HisH and HisF.

Its subcellular location is the cytoplasm. The catalysed reaction is 5-[(5-phospho-1-deoxy-D-ribulos-1-ylimino)methylamino]-1-(5-phospho-beta-D-ribosyl)imidazole-4-carboxamide + L-glutamine = D-erythro-1-(imidazol-4-yl)glycerol 3-phosphate + 5-amino-1-(5-phospho-beta-D-ribosyl)imidazole-4-carboxamide + L-glutamate + H(+). It functions in the pathway amino-acid biosynthesis; L-histidine biosynthesis; L-histidine from 5-phospho-alpha-D-ribose 1-diphosphate: step 5/9. In terms of biological role, IGPS catalyzes the conversion of PRFAR and glutamine to IGP, AICAR and glutamate. The HisF subunit catalyzes the cyclization activity that produces IGP and AICAR from PRFAR using the ammonia provided by the HisH subunit. This chain is Imidazole glycerol phosphate synthase subunit HisF, found in Chlorobium phaeobacteroides (strain BS1).